Consider the following 98-residue polypeptide: Citrate lyase acyl carrier protein (98 aa).

Residue S14 is modified to O-(phosphoribosyl dephospho-coenzyme A)serine.

This sequence belongs to the CitD family. Oligomer with a subunit composition of (alpha,beta,gamma)6.

The protein resides in the cytoplasm. In terms of biological role, covalent carrier of the coenzyme of citrate lyase. The polypeptide is Citrate lyase acyl carrier protein (Escherichia coli O81 (strain ED1a)).